The primary structure comprises 442 residues: MSNSLNSSKYQPLTTRQGDRIAVVSGIRTPFAKQSTAFSTTPAVDLGKLTVKALMDKTDIDPKLIDQVVFGQVVQMPEAPNIAREIVLGTGMNIGTDAYSVTRACATSFQTTANVVESIMAGTIDIGIAGGADSSSVLPIGVSKKLASTLLALSKTKTVYQKLSLLRTLSLKDIAPVPPAVAEYSTGISMGQTAEQMAKSHGITREEQDALAHRSHTLAAKAWKDGLIQDEVMTAFPEPYTVWLDHDNNIRHDSELASYAKLRPAFDRKYGSVTAANSTPLTDGGAALLLMSEKRAKELGYEPLGYIRSFAFSAIDVHHDMLMGPSYATPMALDKAGISLSDLTLIDMHEAFAAQTLSNVKMFASNKFARECLGRDKAIGEIDMDKFNVLGGSIAYGHPFAATGARMIIQTLRELKRRGGGLGLNTACAAGGLGAAMVLEVE.

C105 (acyl-thioester intermediate) is an active-site residue. Residues H398 and C428 each act as proton acceptor in the active site.

This sequence belongs to the thiolase-like superfamily. Thiolase family. Heterotetramer of two alpha chains (FadJ) and two beta chains (FadI).

Its subcellular location is the cytoplasm. It carries out the reaction an acyl-CoA + acetyl-CoA = a 3-oxoacyl-CoA + CoA. It functions in the pathway lipid metabolism; fatty acid beta-oxidation. Functionally, catalyzes the final step of fatty acid oxidation in which acetyl-CoA is released and the CoA ester of a fatty acid two carbons shorter is formed. This chain is 3-ketoacyl-CoA thiolase, found in Aliivibrio fischeri (strain MJ11) (Vibrio fischeri).